A 517-amino-acid chain; its full sequence is Cytochrome P450 monooxygenase cdmJ (517 aa).

A helical membrane pass occupies residues 15-35; the sequence is YMWSLTLFALCLSAILMFPFL. An N-linked (GlcNAc...) asparagine glycan is attached at Asn-404. Cys-451 serves as a coordination point for heme.

Belongs to the cytochrome P450 family. Heme is required as a cofactor.

The protein localises to the membrane. The catalysed reaction is 3-hydroxypentacecilide A + NADPH + O2 + H(+) = chrodrimanin F + NADP(+) + H2O. It catalyses the reaction chrodrimanin C + NADPH + O2 + H(+) = chrodrimanin H + NADP(+) + H2O. It carries out the reaction verruculide A + NADPH + O2 + H(+) = chrodrimanin E + NADP(+) + H2O. The enzyme catalyses chrodrimanin T + NADPH + O2 + H(+) = chrodrimanin A + NADP(+) + H2O. Its pathway is secondary metabolite biosynthesis; terpenoid biosynthesis. Functionally, cytochrome P450 monooxygenase; part of the gene cluster that mediates the biosynthesis of chrodrimanin B, a meroterpenoid that acts as a potent blocker of insect GABA-gated chloride channels. The first step of the pathway is the biosynthesis of 6-hydroxymellein by the polyketide synthase cdmE. The prenyltransferase cdmH acts as a 6-hydroxymellein 5-farnesyltransferase and produces the hydrophobic metabolite verruculide C. The FAD-dependent monooxygenase cdmI further converts verruculide C into verruculide B. The terpene cyclase cdmG then produced the pentacyclic molecule 3-hydroxypentacecilide A, the backbone structure of chrodrimanin B, via folding the farnesyl moiety of the substrate into the chair-boat conformation. The short-chain dehydrogenase/reductase cdmF functions as the 3-OH dehydrogenase that oxidizes the C-3 hydroxyl group of 3-hydroxypentacecilide A and produces chrodrimanin C, the dehydrogenated product of 3-hydroxypentacecilide A. The cytochrome P450 monooxygenase cdmJ then accepts both 3-hydroxypentacecilide A and chrodrimanin C and functions as a C-7-beta-hydroxylase to produce respectively chrodrimanin H and chrodrimanin F. The dioxygenase cdmA accepts chrodrimanin H to afford chrodrimanin E, which is further transformed to chrodrimanin A by the dioxygenase cdmD. CdmA can also accept chrodrimanin C as substrate to convert it into verruculide A, which is further converted into chrodrimanin T by cdmD. The last step of the biosynthesis is proposed to be performed by the acetyltransferase cdmC which acetylates chrodrimanin A to yield chrodrimanin B. The pathway may also lead to the production of additional shunt products, including chrodrimanins T and U. The chain is Cytochrome P450 monooxygenase cdmJ from Talaromyces verruculosus (Penicillium verruculosum).